We begin with the raw amino-acid sequence, 444 residues long: C4-dicarboxylate transport protein (444 aa).

9 helical membrane passes run 21–41 (HLYV…HFYP), 57–77 (LVKM…IAGM), 92–112 (IYFL…ANVV), 161–181 (GDIL…ALVG), 201–221 (LVSI…AFTI), 234–254 (LLIG…LGAV), 320–340 (IYMT…LSLS), 345–365 (LLLV…AGFI), and 368–388 (AATL…ILGI).

The protein belongs to the dicarboxylate/amino acid:cation symporter (DAACS) (TC 2.A.23) family.

Its subcellular location is the cell inner membrane. Functionally, responsible for the transport of dicarboxylates such as succinate, fumarate, and malate from the periplasm across the membrane. The polypeptide is C4-dicarboxylate transport protein (Brucella anthropi (strain ATCC 49188 / DSM 6882 / CCUG 24695 / JCM 21032 / LMG 3331 / NBRC 15819 / NCTC 12168 / Alc 37) (Ochrobactrum anthropi)).